Consider the following 432-residue polypeptide: CinA-like protein (432 aa).

Belongs to the CinA family.

This Colwellia psychrerythraea (strain 34H / ATCC BAA-681) (Vibrio psychroerythus) protein is CinA-like protein.